Consider the following 202-residue polypeptide: COMM domain-containing protein 10 (202 aa).

Position 2 is an N-acetylalanine (alanine 2). The region spanning 133 to 202 (KLETVGWQLN…TIQAQLDSLT (70 aa)) is the COMM domain. Serine 155 is subject to Phosphoserine.

The protein belongs to the COMM domain-containing protein 10 family. Component of the commander complex consisting of the CCC subcomplex and the retriever subcomplex. Component of the CCC (COMMD/CCDC22/CCDC93) subcomplex consisting of COMMD1, COMMD2, COMMD3, COMMD4, COMMD5, COMMD6, COMMD7, COMMD8, COMMD9, COMMD10, CCDC22 and CCDC93; within the complex forms a heterodimer with COMMD5. Interacts with RELA, RELB, NFKB1/p105, NFKB2/p100. Interacts with CCDC22, CCDC93, SCNN1B, CUL1, CUL2, CUL3, CUL4A, CUL4B, CUL7. In terms of tissue distribution, ubiquitous.

The protein localises to the cytoplasm. The protein resides in the nucleus. Functionally, scaffold protein in the commander complex that is essential for endosomal recycling of transmembrane cargos; the commander complex is composed of the CCC subcomplex and the retriever subcomplex. May modulate activity of cullin-RING E3 ubiquitin ligase (CRL) complexes. May down-regulate activation of NF-kappa-B. In Homo sapiens (Human), this protein is COMM domain-containing protein 10 (COMMD10).